A 47-amino-acid chain; its full sequence is PhoP/PhoQ regulator MgrB (47 aa).

A helical membrane pass occupies residues 6 to 26 (WVILIIVLIACVILWTQTINV).

It belongs to the MgrB family. As to quaternary structure, may form homooligomers. Probably interacts with the periplasmic domain of PhoQ.

The protein resides in the cell inner membrane. PhoP-regulated transcription is redox-sensitive, being activated when the periplasm becomes more reducing. MgrB acts between DsbA/DsbB and PhoP/PhoQ in this pathway. Represses PhoP/PhoQ signaling, possibly by binding to the periplasmic domain of PhoQ, altering its activity and that of downstream effector PhoP. This is PhoP/PhoQ regulator MgrB from Enterobacter sp. (strain 638).